A 751-amino-acid chain; its full sequence is Cytosolic neutral trehalase (751 aa).

Positions 1–15 are enriched in polar residues; that stretch reads MDDSALPSNTSNGIN. 2 disordered regions span residues 1–42 and 64–88; these read MDDS…NPES and DFHE…NPRK. Residues 64–78 show a composition bias toward basic and acidic residues; that stretch reads DFHEMLGDRNTRRGS. Positions 105, 107, 109, 111, and 116 each coordinate Ca(2+). Substrate is bound by residues arginine 292, 299–300, asparagine 336, 345–347, glutamate 412, arginine 461, and glycine 464; these read WD and RSQ. Residues aspartate 466 and glutamate 670 each act as proton donor/acceptor in the active site.

Belongs to the glycosyl hydrolase 37 family. Ca(2+) serves as cofactor.

The protein localises to the cytoplasm. The enzyme catalyses alpha,alpha-trehalose + H2O = alpha-D-glucose + beta-D-glucose. It functions in the pathway carbohydrate degradation. With respect to regulation, activated by calcium. In terms of biological role, hydrolyzes intracellular trehalose to glucose. The disaccharide trehalose serves as a storage carbohydrate that is mobilized during conidial germination. Regulates the level of trehalose as a protectant for cell integrity during heat stress. In Emericella nidulans (strain FGSC A4 / ATCC 38163 / CBS 112.46 / NRRL 194 / M139) (Aspergillus nidulans), this protein is Cytosolic neutral trehalase.